Consider the following 479-residue polypeptide: ATP synthase subunit beta (479 aa).

160-167 (GGAGVGKT) provides a ligand contact to ATP.

It belongs to the ATPase alpha/beta chains family. As to quaternary structure, F-type ATPases have 2 components, CF(1) - the catalytic core - and CF(0) - the membrane proton channel. CF(1) has five subunits: alpha(3), beta(3), gamma(1), delta(1), epsilon(1). CF(0) has three main subunits: a(1), b(2) and c(9-12). The alpha and beta chains form an alternating ring which encloses part of the gamma chain. CF(1) is attached to CF(0) by a central stalk formed by the gamma and epsilon chains, while a peripheral stalk is formed by the delta and b chains.

Its subcellular location is the cell inner membrane. It catalyses the reaction ATP + H2O + 4 H(+)(in) = ADP + phosphate + 5 H(+)(out). Its function is as follows. Produces ATP from ADP in the presence of a proton gradient across the membrane. The catalytic sites are hosted primarily by the beta subunits. The chain is ATP synthase subunit beta from Anaplasma phagocytophilum (strain HZ).